The chain runs to 340 residues: Sterol-4-alpha-carboxylate 3-dehydrogenase erg26, decarboxylating (340 aa).

Tyrosine 144 serves as the catalytic Proton acceptor. Lysine 148 is a binding site for NAD(+).

It belongs to the 3-beta-HSD family. In terms of assembly, heterotetramer of erg25, erg26, erg27 and erg28. Erg28 acts as a scaffold to tether erg27 and other 4,4-demethylation-related enzymes, forming a demethylation enzyme complex, in the endoplasmic reticulum.

The protein localises to the endoplasmic reticulum membrane. It catalyses the reaction 4beta-methylzymosterol-4alpha-carboxylate + NADP(+) = 3-dehydro-4-methylzymosterol + CO2 + NADPH. It functions in the pathway steroid biosynthesis; zymosterol biosynthesis; zymosterol from lanosterol: step 4/6. The protein operates within steroid metabolism; ergosterol biosynthesis. In terms of biological role, sterol-4-alpha-carboxylate 3-dehydrogenase; part of the third module of ergosterol biosynthesis pathway that includes by the late steps of the pathway. Erg26 is a catalytic component of the C-4 demethylation complex that catalyzes the oxidative decarboxylation that results in a reduction of the 3-beta-hydroxy group at the C-3 carbon to an oxo group. The third module or late pathway involves the ergosterol synthesis itself through consecutive reactions that mainly occur in the endoplasmic reticulum (ER) membrane. Firstly, the squalene synthase erg9 catalyzes the condensation of 2 farnesyl pyrophosphate moieties to form squalene, which is the precursor of all steroids. Secondly, squalene is converted into lanosterol by the consecutive action of the squalene epoxidase erg1 and the lanosterol synthase erg7. The lanosterol 14-alpha-demethylase erg11/cyp1 catalyzes C14-demethylation of lanosterol to produce 4,4'-dimethyl cholesta-8,14,24-triene-3-beta-ol. In the next steps, a complex process involving various demethylation, reduction and desaturation reactions catalyzed by the C-14 reductase erg24 and the C-4 demethylation complex erg25-erg26-erg27 leads to the production of zymosterol. Erg28 likely functions in the C-4 demethylation complex reaction by tethering erg26 and Erg27 to the endoplasmic reticulum or to facilitate interaction between these proteins. Then, the sterol 24-C-methyltransferase erg6 catalyzes the methyl transfer from S-adenosyl-methionine to the C-24 of zymosterol to form fecosterol. The C-8 sterol isomerase erg2 catalyzes the reaction which results in unsaturation at C-7 in the B ring of sterols and thus converts fecosterol to episterol. The sterol-C5-desaturases erg31 and erg32 then catalyze the introduction of a C-5 double bond in the B ring to produce 5-dehydroepisterol. The C-22 sterol desaturase erg5 further converts 5-dehydroepisterol into ergosta-5,7,22,24(28)-tetraen-3beta-ol by forming the C-22(23) double bond in the sterol side chain. Finally, ergosta-5,7,22,24(28)-tetraen-3beta-ol is substrate of the C-24(28) sterol reductase erg4 to produce ergosterol. In the genus Schizosaccharomyces, a second route exists between lanosterol and fecosterol, via the methylation of lanosterol to eburicol by erg6, followed by C14-demethylation by erg11/cyp1 and C4-demethylation by the demethylation complex erg25-erg26-erg27. The protein is Sterol-4-alpha-carboxylate 3-dehydrogenase erg26, decarboxylating of Schizosaccharomyces pombe (strain 972 / ATCC 24843) (Fission yeast).